The chain runs to 137 residues: MANKPSAEELKKNLSDMQFYVTQNHGTEPPFTGRLLHNKRDGVYHCLICDAPLFHSQTKYDSGCGWPSFYEPVSEESIRYIKDLSHGVQRIEIRCGNCDAHLGHVFPDGPQPTGERYCVNSASLRFTDGENGEEING.

The MsrB domain maps to 7–129; that stretch reads AEELKKNLSD…NSASLRFTDG (123 aa). Residues Cys46, Cys49, Cys95, and Cys98 each coordinate Zn(2+). Cys118 serves as the catalytic Nucleophile.

Belongs to the MsrB Met sulfoxide reductase family. The cofactor is Zn(2+).

It carries out the reaction L-methionyl-[protein] + [thioredoxin]-disulfide + H2O = L-methionyl-(R)-S-oxide-[protein] + [thioredoxin]-dithiol. In Shigella dysenteriae serotype 1 (strain Sd197), this protein is Peptide methionine sulfoxide reductase MsrB.